The following is a 141-amino-acid chain: Hemoglobin subunit alpha (141 aa).

The Globin domain maps to 1-141; it reads VLSPADKTNL…VSTVLTSKYR (141 aa). S3 carries the phosphoserine modification. The residue at position 7 (K7) is an N6-succinyllysine. T8 is subject to Phosphothreonine. K11 carries the post-translational modification N6-succinyllysine. K16 is modified (N6-acetyllysine; alternate). Position 16 is an N6-succinyllysine; alternate (K16). Y24 is modified (phosphotyrosine). Position 40 is an N6-succinyllysine (K40). Residue S49 is modified to Phosphoserine. Residue H58 participates in O2 binding. H87 serves as a coordination point for heme b. S102 is subject to Phosphoserine. T108 is subject to Phosphothreonine. S124 carries the phosphoserine modification. Phosphothreonine occurs at positions 134 and 137. At S138 the chain carries Phosphoserine.

Belongs to the globin family. As to quaternary structure, heterotetramer of two alpha chains and two beta chains. As to expression, red blood cells.

Involved in oxygen transport from the lung to the various peripheral tissues. The protein is Hemoglobin subunit alpha of Tamias striatus (Eastern chipmunk).